The chain runs to 377 residues: Nitric oxide reductase FlRd-NAD(+) reductase (377 aa).

The protein belongs to the FAD-dependent oxidoreductase family. The cofactor is FAD.

It localises to the cytoplasm. The catalysed reaction is 2 reduced [nitric oxide reductase rubredoxin domain] + NAD(+) + H(+) = 2 oxidized [nitric oxide reductase rubredoxin domain] + NADH. Its pathway is nitrogen metabolism; nitric oxide reduction. One of at least two accessory proteins for anaerobic nitric oxide (NO) reductase. Reduces the rubredoxin moiety of NO reductase. This chain is Nitric oxide reductase FlRd-NAD(+) reductase, found in Salmonella paratyphi A (strain AKU_12601).